The chain runs to 280 residues: NAD kinase (280 aa).

Aspartate 60 acts as the Proton acceptor in catalysis. Residues 60–61 (DG), 134–135 (ND), arginine 145, aspartate 164, 175–180 (TAYSLS), and glutamine 234 each bind NAD(+).

Belongs to the NAD kinase family. It depends on a divalent metal cation as a cofactor.

The protein localises to the cytoplasm. The enzyme catalyses NAD(+) + ATP = ADP + NADP(+) + H(+). Its function is as follows. Involved in the regulation of the intracellular balance of NAD and NADP, and is a key enzyme in the biosynthesis of NADP. Catalyzes specifically the phosphorylation on 2'-hydroxyl of the adenosine moiety of NAD to yield NADP. The sequence is that of NAD kinase from Carboxydothermus hydrogenoformans (strain ATCC BAA-161 / DSM 6008 / Z-2901).